The chain runs to 364 residues: MKMTFRWYGENVDPIPLRYIRQIPGVEGIVWALHDIPAGECWTVERIEEVKAQAAKYNFNTDVVESVNVHEDIKLGLPSRKKYIENYKNTLKNLGRAGVKVVCYNFMPVFDWTRTDLYKPQSDGSTALFYEKAKVDNINPVKFLEQMSKQEGLLTMPGWEPERLSKIKELFEAYKEIKDDDLWENLKYFLQEIIPVAQESGIKMAIHPDDPPWSIFGLSRIITCRDNIKKFLSLVDNPSNGLTLCSGSLGSCTKNNIAAIVREFGDRIYFAHIRNIRHFKNGDFTETSHKTSDGSLDITEIVKAYHDINYKYYVRPDHGRHIWDEKCRPGYGLYDRSLGIMYIFGLWDAFEKISASKRGQYGVE.

It belongs to the mannonate dehydratase family. The cofactor is Fe(2+). Requires Mn(2+) as cofactor.

The enzyme catalyses D-mannonate = 2-dehydro-3-deoxy-D-gluconate + H2O. The protein operates within carbohydrate metabolism; pentose and glucuronate interconversion. Its function is as follows. Catalyzes the dehydration of D-mannonate. The polypeptide is Mannonate dehydratase (Endomicrobium trichonymphae).